Reading from the N-terminus, the 136-residue chain is ATP synthase epsilon chain (136 aa).

The tract at residues glycine 112–glutamate 136 is disordered. Basic and acidic residues predominate over residues aspartate 116–asparagine 125.

It belongs to the ATPase epsilon chain family. In terms of assembly, F-type ATPases have 2 components, CF(1) - the catalytic core - and CF(0) - the membrane proton channel. CF(1) has five subunits: alpha(3), beta(3), gamma(1), delta(1), epsilon(1). CF(0) has three main subunits: a, b and c.

It localises to the cellular thylakoid membrane. In terms of biological role, produces ATP from ADP in the presence of a proton gradient across the membrane. This Prochlorococcus marinus (strain SARG / CCMP1375 / SS120) protein is ATP synthase epsilon chain.